A 261-amino-acid chain; its full sequence is Thiamine thiazole synthase (261 aa).

NAD(+)-binding positions include Ala-33, Glu-52–Arg-53, Gly-60, Val-124, and His-152–Asp-154. Positions 154 and 169 each coordinate Fe cation. Residue Ile-219 participates in NAD(+) binding. Arg-229 is a binding site for glycine.

It belongs to the THI4 family. Homooctamer; tetramer of dimers. Requires Fe(2+) as cofactor.

The catalysed reaction is hydrogen sulfide + glycine + NAD(+) = ADP-5-ethyl-4-methylthiazole-2-carboxylate + nicotinamide + 3 H2O + H(+). It participates in cofactor biosynthesis; thiamine diphosphate biosynthesis. Its function is as follows. Involved in the biosynthesis of the thiazole moiety of thiamine. Catalyzes the conversion of NAD and glycine to adenosine diphosphate 5-(2-hydroxyethyl)-4-methylthiazole-2-carboxylate (ADT), an adenylated thiazole intermediate, using free sulfide as a source of sulfur. This is Thiamine thiazole synthase from Pyrobaculum calidifontis (strain DSM 21063 / JCM 11548 / VA1).